Consider the following 445-residue polypeptide: Chromosome partition protein MukF (445 aa).

The interval leucine 213–isoleucine 241 is leucine-zipper.

The protein belongs to the MukF family. In terms of assembly, interacts, and probably forms a ternary complex, with MukE and MukB via its C-terminal region. The complex formation is stimulated by calcium or magnesium. It is required for an interaction between MukE and MukB.

It localises to the cytoplasm. It is found in the nucleoid. Its function is as follows. Involved in chromosome condensation, segregation and cell cycle progression. May participate in facilitating chromosome segregation by condensation DNA from both sides of a centrally located replisome during cell division. Not required for mini-F plasmid partitioning. Probably acts via its interaction with MukB and MukE. Overexpression results in anucleate cells. It has a calcium binding activity. This Vibrio cholerae serotype O1 (strain ATCC 39315 / El Tor Inaba N16961) protein is Chromosome partition protein MukF.